The sequence spans 548 residues: uncharacterized protein (548 aa).

In terms of domain architecture, DhaL spans K8–K200.

This is an uncharacterized protein from Staphylococcus aureus (strain bovine RF122 / ET3-1).